Here is a 101-residue protein sequence, read N- to C-terminus: MIPGEYQLADGDVQANVGRKTVKLEVVNSGDRPIQVGSHYHFFETNHALKFDRLQARGMRLNVPSGNAVRFEPGEAKEVELVEFGGNKVIYGFHNEIDGKL.

It belongs to the urease beta subunit family. In terms of assembly, heterotrimer of UreA (gamma), UreB (beta) and UreC (alpha) subunits. Three heterotrimers associate to form the active enzyme.

The protein resides in the cytoplasm. It carries out the reaction urea + 2 H2O + H(+) = hydrogencarbonate + 2 NH4(+). It functions in the pathway nitrogen metabolism; urea degradation; CO(2) and NH(3) from urea (urease route): step 1/1. The chain is Urease subunit beta from Actinobacillus pleuropneumoniae serotype 7 (strain AP76).